A 230-amino-acid chain; its full sequence is uncharacterized protein (230 aa).

Residues 17-37 (AGALSLGIGFFALASALWFLI) traverse the membrane as a helical segment. N-linked (GlcNAc...) asparagine glycosylation occurs at N126.

Its subcellular location is the membrane. This is an uncharacterized protein from Mus musculus (Mouse).